The following is a 170-amino-acid chain: RNA pyrophosphohydrolase (170 aa).

The Nudix hydrolase domain occupies 6-149 (GFRPNVGIVI…KRDVYRRALK (144 aa)). Positions 38 to 59 (GGIDDGETPEQAMYRELYEEVG) match the Nudix box motif.

It belongs to the Nudix hydrolase family. RppH subfamily. A divalent metal cation is required as a cofactor.

Accelerates the degradation of transcripts by removing pyrophosphate from the 5'-end of triphosphorylated RNA, leading to a more labile monophosphorylated state that can stimulate subsequent ribonuclease cleavage. The sequence is that of RNA pyrophosphohydrolase from Aliivibrio fischeri (strain ATCC 700601 / ES114) (Vibrio fischeri).